The primary structure comprises 540 residues: NAD(P)H-quinone oxidoreductase subunit 2 B, chloroplastic (540 aa).

A run of 13 helical transmembrane segments spans residues 24-44, 57-77, 99-119, 124-144, 149-169, 183-203, 227-247, 325-345, 353-373, 384-404, 425-445, 448-468, and 514-534; these read LLLFDGSLIFPECILIFGLIL, IPWLYFIPSTSLVMSITALLF, IFQFLILLCSTLCIPLSVEYI, MAITEFLLFVLTATLGGMFLC, FITIFVAPECFSLCSYLLSGY, YLLMGGASSSILVHGFSWLYG, PGISIALIFITVGIGFKLSPA, WHLLLEILAILSMILGNLIAI, MLAYSSIGQIGYVIIGIIVGD, YMLFYISMNLGTFACIVLFGL, ALSLALCLLSLGGLPPLAGFF, LYLFWCGWQAGLYFLVLIGLL, and MIVCVIASTIPGISMNPIIAI.

The protein belongs to the complex I subunit 2 family. As to quaternary structure, NDH is composed of at least 16 different subunits, 5 of which are encoded in the nucleus.

It localises to the plastid. It is found in the chloroplast thylakoid membrane. The enzyme catalyses a plastoquinone + NADH + (n+1) H(+)(in) = a plastoquinol + NAD(+) + n H(+)(out). It catalyses the reaction a plastoquinone + NADPH + (n+1) H(+)(in) = a plastoquinol + NADP(+) + n H(+)(out). NDH shuttles electrons from NAD(P)H:plastoquinone, via FMN and iron-sulfur (Fe-S) centers, to quinones in the photosynthetic chain and possibly in a chloroplast respiratory chain. The immediate electron acceptor for the enzyme in this species is believed to be plastoquinone. Couples the redox reaction to proton translocation, and thus conserves the redox energy in a proton gradient. This chain is NAD(P)H-quinone oxidoreductase subunit 2 B, chloroplastic, found in Coffea arabica (Arabian coffee).